Consider the following 411-residue polypeptide: Dual-specificity RNA methyltransferase RlmN (411 aa).

Glu125 serves as the catalytic Proton acceptor. Residues 131–380 enclose the Radical SAM core domain; it reads EEGRGTLCIS…IRTPRGRDIL (250 aa). Cys138 and Cys383 form a disulfide bridge. [4Fe-4S] cluster contacts are provided by Cys145, Cys149, and Cys152. S-adenosyl-L-methionine contacts are provided by residues 209-210, Ser241, 263-265, and Asn340; these read GE and SLH. Cys383 serves as the catalytic S-methylcysteine intermediate.

Belongs to the radical SAM superfamily. RlmN family. Requires [4Fe-4S] cluster as cofactor.

The protein localises to the cytoplasm. It carries out the reaction adenosine(2503) in 23S rRNA + 2 reduced [2Fe-2S]-[ferredoxin] + 2 S-adenosyl-L-methionine = 2-methyladenosine(2503) in 23S rRNA + 5'-deoxyadenosine + L-methionine + 2 oxidized [2Fe-2S]-[ferredoxin] + S-adenosyl-L-homocysteine. The catalysed reaction is adenosine(37) in tRNA + 2 reduced [2Fe-2S]-[ferredoxin] + 2 S-adenosyl-L-methionine = 2-methyladenosine(37) in tRNA + 5'-deoxyadenosine + L-methionine + 2 oxidized [2Fe-2S]-[ferredoxin] + S-adenosyl-L-homocysteine. In terms of biological role, specifically methylates position 2 of adenine 2503 in 23S rRNA and position 2 of adenine 37 in tRNAs. m2A2503 modification seems to play a crucial role in the proofreading step occurring at the peptidyl transferase center and thus would serve to optimize ribosomal fidelity. This is Dual-specificity RNA methyltransferase RlmN from Brucella melitensis biotype 2 (strain ATCC 23457).